The following is a 310-amino-acid chain: Ribosomal RNA small subunit methyltransferase H (310 aa).

S-adenosyl-L-methionine contacts are provided by residues 32–34 (GGH), D52, F79, D100, and Q107.

This sequence belongs to the methyltransferase superfamily. RsmH family.

It localises to the cytoplasm. It catalyses the reaction cytidine(1402) in 16S rRNA + S-adenosyl-L-methionine = N(4)-methylcytidine(1402) in 16S rRNA + S-adenosyl-L-homocysteine + H(+). Functionally, specifically methylates the N4 position of cytidine in position 1402 (C1402) of 16S rRNA. This is Ribosomal RNA small subunit methyltransferase H from Geobacillus thermodenitrificans (strain NG80-2).